A 295-amino-acid chain; its full sequence is Ubiquinol-cytochrome c reductase complex assembly factor 1 (295 aa).

The protein belongs to the CBP3 family. As to quaternary structure, interacts with UQCC2. Interacts with UQCC3. Forms a complex, named COMB/coordinator of mitochondrial CYTB biogenesis, composed of UQCC1, UQCC2, UQCC4, UQCC5 and UQCC6; stabilizes nascent cytochrome b/MT-CYB and promotes its membrane insertion. Forms a complex, named COMA, composed of UQCC1, UQCC2 and UQCC4; activates MT-CYB translation. Forms a complex, named COMC, composed of UQCC1, UQCC2; UQCC3 and UQCC4; mediates MT-CYB hemylation and association with the first nuclear-encoded CIII subunit UQCRQ. In terms of tissue distribution, in the brain it is restricted to the olfactory bulb, the hippocampus, the piriform cortex and the Purkinje cells.

The protein resides in the mitochondrion inner membrane. It localises to the cytoplasmic vesicle. Functionally, required for the assembly of the ubiquinol-cytochrome c reductase complex (mitochondrial respiratory chain complex III or cytochrome b-c1 complex). Involved in cytochrome b translation and/or stability. In Mus musculus (Mouse), this protein is Ubiquinol-cytochrome c reductase complex assembly factor 1 (Uqcc1).